A 429-amino-acid chain; its full sequence is Chaperone SurA (429 aa).

Residues 1 to 18 form the signal peptide; the sequence is MFKRIALVCALFSGVCFA. PpiC domains lie at 170–271 and 281–380; these read NLTY…KLVA and ITQT…EVIA.

The protein localises to the periplasm. It carries out the reaction [protein]-peptidylproline (omega=180) = [protein]-peptidylproline (omega=0). Its function is as follows. Chaperone involved in the correct folding and assembly of outer membrane proteins. Recognizes specific patterns of aromatic residues and the orientation of their side chains, which are found more frequently in integral outer membrane proteins. May act in both early periplasmic and late outer membrane-associated steps of protein maturation. This Legionella pneumophila subsp. pneumophila (strain Philadelphia 1 / ATCC 33152 / DSM 7513) protein is Chaperone SurA.